Reading from the N-terminus, the 415-residue chain is Probable G-protein coupled receptor 19 (415 aa).

The Extracellular portion of the chain corresponds to 1–69 (MVFAHRMDNS…LKPGEVATAS (69 aa)). Asn-25 and Asn-52 each carry an N-linked (GlcNAc...) asparagine glycan. A helical membrane pass occupies residues 70-90 (IFFGILWLFSIFGNSLVCLVI). Over 91 to 102 (HRSRRTQSTTNY) the chain is Cytoplasmic. A helical membrane pass occupies residues 103-123 (FVVSMACADLLISVASTPFVL). The Extracellular segment spans residues 124–143 (LQFTTGRWTLGSATCKVVRY). Cys-138 and Cys-210 are oxidised to a cystine. Residues 144 to 161 (FQYLTPGVQIYVLLSICI) form a helical membrane-spanning segment. The Cytoplasmic segment spans residues 162–182 (DRFYTIVYPLSFKVSREKAKK). The helical transmembrane segment at 183 to 203 (MIAASWVFDAGFVTPVLFFYG) threads the bilayer. Topologically, residues 204 to 221 (SNWDSHCNYFLPSSWEGT) are extracellular. Residues 222-242 (AYTVIHFLVGFVIPSVLIILF) traverse the membrane as a helical segment. Topologically, residues 243 to 277 (YQKVIKYIWRIGTDGRTVRRTMNIVPRTKVKTIKM) are cytoplasmic. The chain crosses the membrane as a helical span at residues 278-298 (FLILNLLFLLSWLPFHVAQLW). Residues 299-309 (HPHEQDYKKSS) are Extracellular-facing. Residues 310 to 325 (LVFTAITWISFSSSAS) form a helical membrane-spanning segment. Over 326 to 415 (KPTLYSIYNA…INSNPPNTFV (90 aa)) the chain is Cytoplasmic.

This sequence belongs to the G-protein coupled receptor 1 family. As to expression, abundant expression in the brain.

The protein resides in the cell membrane. Its function is as follows. G-protein coupled receptor that plays a role in the regulation of circadian rhythms and energy metabolism. Participates in maintaining proper circadian gene expression in the suprachiasmatic nucleus (SCN), the locus of the master circadian clock in the brain. May function as a coordinator of aging-associated metabolic dysfunction, stress response, DNA integrity management, and eventual senescence. Upon binding to adropin, modulates mitochondrial energy metabolism via the p44/42-PDK4 signaling pathway, influencing pyruvate dehydrogenase activity. This is Probable G-protein coupled receptor 19 (GPR19) from Homo sapiens (Human).